A 122-amino-acid chain; its full sequence is Phospholipase A2 crotoxin basic subunit CBd (122 aa).

Intrachain disulfides connect Cys26-Cys115, Cys28-Cys44, Cys43-Cys95, Cys49-Cys122, Cys50-Cys88, Cys57-Cys81, and Cys75-Cys86. Ca(2+)-binding residues include Tyr27, Gly29, and Gly31. His47 is an active-site residue. Residue Asp48 participates in Ca(2+) binding. Residue Asp89 is part of the active site.

The protein belongs to the phospholipase A2 family. Group II subfamily. D49 sub-subfamily. Heterodimer of one of the acidic (CA1, CA2, CA3 or CA4) and one of the basic (CBa1, CBa2, CBb, CBc or CBd) subunits; non-covalently linked. The acidic subunit is non-toxic, without enzymatic activity and comprises 3 peptides that are cross-linked by 5 disulfide bridges. The basic subunit is toxic, has phospholipase A2 activity and is composed of a single chain. Multiple variants of each subunit give different crotoxin complexes that can be subdivided into 2 classes: (1) those of high toxicity, low PLA2 activity (CBb, CBc and CBd linked with high affinity to any CA) and high stability (K(d)=4.5 nM) and (2) those of moderate toxicity, high PLA2 activity (CBa2 linked with low affinity to any CA) and low stability (K(d)=25 nM). Interacts with crotoxin inhibitor from Crotalus serum (CICS); the interaction leads to dissociation of the CA-CB heterodimer and to inhibition of PLA2 activity of the CB subunit. Interacts with human NBD1 domain of CFTR. The cofactor is Ca(2+). In terms of tissue distribution, expressed by the venom gland.

The protein localises to the secreted. It catalyses the reaction a 1,2-diacyl-sn-glycero-3-phosphocholine + H2O = a 1-acyl-sn-glycero-3-phosphocholine + a fatty acid + H(+). In terms of biological role, heterodimer CA-CB: Crotoxin is a potent presynaptic neurotoxin that possesses phospholipase A2 (PLA2) activity and exerts a lethal action by blocking neuromuscular transmission. It consists of a non-covalent association of a basic and weakly toxic PLA2 subunit (CBa2, CBb, CBc, or CBd), with a small acidic, non-enzymatic and non-toxic subunit (CA1, CA2, CA3 or CA4). The complex acts by binding to a specific 48-kDa protein (R48) receptor located on presynaptic membranes, forming a transient ternary complex CA-CB-R48, followed by dissociation of the CA-CB complex and release of the CA subunit. At equilibrium, only the CB subunits remain associated with the specific crotoxin receptor. In addition to neurotoxicity, crotoxin has been found to exert myotoxicity, nephrotoxicity, and cardiovascular toxicity. Moreover, anti-inflammatory, immunomodulatory, anti-tumor and analgesic effects of crotoxin have also been reported. Monomer CBd: The basic subunit of crotoxin is a snake venom phospholipase A2 (PLA2) that exhibits weak neurotoxicity (10-fold less than the heterodimer) and very strong anticoagulant effects by binding to factor Xa (F10) and inhibiting the prothrombinase activity. In addition, it shows the same effects described for the heterodimer and binds the nucleotide-binding domain (NBD1) of CFTR chloride channels and increases the channel current. PLA2 catalyzes the calcium-dependent hydrolysis of the 2-acyl groups in 3-sn-phosphoglycerides. The sequence is that of Phospholipase A2 crotoxin basic subunit CBd from Crotalus durissus terrificus (South American rattlesnake).